Reading from the N-terminus, the 525-residue chain is Peptide chain release factor 3 (525 aa).

The region spanning Glu-11–Glu-279 is the tr-type G domain. GTP contacts are provided by residues Ser-20–Thr-27, Asp-88–His-92, and Asn-142–Asp-145.

The protein belongs to the TRAFAC class translation factor GTPase superfamily. Classic translation factor GTPase family. PrfC subfamily.

The protein localises to the cytoplasm. Its function is as follows. Increases the formation of ribosomal termination complexes and stimulates activities of RF-1 and RF-2. It binds guanine nucleotides and has strong preference for UGA stop codons. It may interact directly with the ribosome. The stimulation of RF-1 and RF-2 is significantly reduced by GTP and GDP, but not by GMP. In Latilactobacillus sakei subsp. sakei (strain 23K) (Lactobacillus sakei subsp. sakei), this protein is Peptide chain release factor 3.